A 491-amino-acid chain; its full sequence is UDP-N-acetylmuramate--L-alanine ligase (491 aa).

126–132 (GTHGKTT) is a binding site for ATP.

It belongs to the MurCDEF family.

It is found in the cytoplasm. It catalyses the reaction UDP-N-acetyl-alpha-D-muramate + L-alanine + ATP = UDP-N-acetyl-alpha-D-muramoyl-L-alanine + ADP + phosphate + H(+). Its pathway is cell wall biogenesis; peptidoglycan biosynthesis. Its function is as follows. Cell wall formation. The sequence is that of UDP-N-acetylmuramate--L-alanine ligase from Escherichia coli (strain K12 / MC4100 / BW2952).